The sequence spans 885 residues: Ankyrin repeat and SAM domain-containing protein 6 (885 aa).

ANK repeat units follow at residues 8 to 37, 68 to 97, 101 to 130, 134 to 163, 181 to 210, 215 to 244, 282 to 312, 316 to 345, 350 to 379, and 383 to 414; these read PGLQ…EPVA, AGNS…SVNS, YGWS…DVNA, LGAS…TVDH, LGIT…DPNH, VGWS…NPDH, KRRP…HVNL, DGAT…DMNK, HGWT…DVTL, and NGYT…QVNK. 3-hydroxyasparagine is present on asparagine 129. 4 disordered regions span residues 415–439, 491–522, 563–775, and 855–885; these read DRGG…SIPM, MRAP…PRRE, SSDR…ITDE, and FESS…SSRR. The span at 608-640 shows a compositional bias: low complexity; sequence PSISRSPTSPASSGNFNHSPHSSGGASGVGSMS. Serine 650 carries the phosphoserine modification. Over residues 650–662 the composition is skewed to polar residues; sequence SGGSVDSVLSQIA. 2 stretches are compositionally biased toward low complexity: residues 689-713 and 722-739; these read GSSP…TSSS and PPSG…TLTP. 2 positions are modified to phosphoserine: serine 734 and serine 742. Positions 750–770 are enriched in low complexity; it reads SSVSSSSSHRQSKSSGGSSSG. The 64-residue stretch at 773 to 836 folds into the SAM domain; sequence TDEDELTGIL…LAAISELNAG (64 aa). A compositionally biased stretch (polar residues) spans 855–865; the sequence is FESSASNTRAP. Residues 876 to 885 show a composition bias toward basic and acidic residues; the sequence is RPEETVSSRR.

Homooligomer. Interacts with NEK8. Central component of a complex containing at least ANKS6, INVS, NEK8 and NPHP3. ANKS6 may organize complex assembly by linking INVS and NPHP3 to NEK8 and INVS may target the complex to the proximal ciliary axoneme. Interacts (via SAM domain) with BICC1 (via KH domains) in an RNA-dependent manner. Interacts (via SAM domain) with ANKS3 (via SAM domain). Hydroxylated at Asn-129, most probably by HIF1AN. This hydroxylation results in decreased NEK8-binding. As to expression, widely expressed with moderate level in brain, skeletal muscle and testis. Expressed in renal tubules.

It is found in the cell projection. It localises to the cilium. The protein localises to the cytoplasm. Its function is as follows. Required for renal function. The chain is Ankyrin repeat and SAM domain-containing protein 6 (Anks6) from Rattus norvegicus (Rat).